A 499-amino-acid chain; its full sequence is Endoglucanase (499 aa).

Positions 1-29 are cleaved as a signal peptide; that stretch reads MKRSISIFITCLLIAVLTMGGLLPSPASA. Substrate is bound by residues His-65, 69 to 70, Tyr-96, and His-131; that span reads WY. The Proton donor role is filled by Glu-169. Substrate is bound at residue Tyr-231. The active-site Nucleophile is the Glu-257. Substrate-binding positions include 263–264, Trp-291, and 296–298; these read AS and KQE. Residues 330–340 are compositionally biased toward basic and acidic residues; that stretch reads RGTKDSTKDVP. Positions 330 to 353 are disordered; sequence RGTKDSTKDVPETPAQDNPTQEKG. In terms of domain architecture, CBM3 spans 350 to 499; the sequence is QEKGVSVQYK…GKLIWGTEPN (150 aa).

Belongs to the glycosyl hydrolase 5 (cellulase A) family.

The catalysed reaction is Endohydrolysis of (1-&gt;4)-beta-D-glucosidic linkages in cellulose, lichenin and cereal beta-D-glucans.. This is Endoglucanase (bglC) from Bacillus subtilis.